The chain runs to 201 residues: Ubiquitin-conjugating enzyme E2 E2 (201 aa).

Residues 1–10 (MSTEAQRVDD) are compositionally biased toward basic and acidic residues. A disordered region spans residues 1–55 (MSTEAQRVDDSPSTSGGSSDGDQRESVQQEPEREQVQPKKKEGKISSKTAAKLST). Ser2 is modified (N-acetylserine). 4 positions are modified to phosphoserine: Ser11, Ser15, Ser18, and Ser19. Over residues 21–45 (GDQRESVQQEPEREQVQPKKKEGKI) the composition is skewed to basic and acidic residues. A compositionally biased stretch (low complexity) spans 46–55 (SSKTAAKLST). Residues 55–201 (TSAKRIQKEL…ARQWTKRYAT (147 aa)) enclose the UBC core domain. Cys139 acts as the Glycyl thioester intermediate in catalysis.

This sequence belongs to the ubiquitin-conjugating enzyme family. In terms of processing, autoubiquitinated in vitro.

The enzyme catalyses S-ubiquitinyl-[E1 ubiquitin-activating enzyme]-L-cysteine + [E2 ubiquitin-conjugating enzyme]-L-cysteine = [E1 ubiquitin-activating enzyme]-L-cysteine + S-ubiquitinyl-[E2 ubiquitin-conjugating enzyme]-L-cysteine.. It functions in the pathway protein modification; protein ubiquitination. Accepts ubiquitin from the E1 complex and catalyzes its covalent attachment to other proteins. In vitro catalyzes 'Lys-11'- and 'Lys-48'-, as well as 'Lys-63'-linked polyubiquitination. Catalyzes the ISGylation of influenza A virus NS1 protein. This Homo sapiens (Human) protein is Ubiquitin-conjugating enzyme E2 E2.